Consider the following 242-residue polypeptide: UPF0173 metal-dependent hydrolase Rxyl_1261 (242 aa).

The protein belongs to the UPF0173 family.

This Rubrobacter xylanophilus (strain DSM 9941 / JCM 11954 / NBRC 16129 / PRD-1) protein is UPF0173 metal-dependent hydrolase Rxyl_1261.